The sequence spans 308 residues: Aspartate carbamoyltransferase catalytic subunit (308 aa).

Carbamoyl phosphate is bound by residues arginine 58 and threonine 59. Residue lysine 86 coordinates L-aspartate. Positions 108, 136, and 139 each coordinate carbamoyl phosphate. The L-aspartate site is built by arginine 169 and arginine 227. Positions 268 and 269 each coordinate carbamoyl phosphate.

It belongs to the aspartate/ornithine carbamoyltransferase superfamily. ATCase family. As to quaternary structure, heterododecamer (2C3:3R2) of six catalytic PyrB chains organized as two trimers (C3), and six regulatory PyrI chains organized as three dimers (R2).

The enzyme catalyses carbamoyl phosphate + L-aspartate = N-carbamoyl-L-aspartate + phosphate + H(+). It participates in pyrimidine metabolism; UMP biosynthesis via de novo pathway; (S)-dihydroorotate from bicarbonate: step 2/3. Functionally, catalyzes the condensation of carbamoyl phosphate and aspartate to form carbamoyl aspartate and inorganic phosphate, the committed step in the de novo pyrimidine nucleotide biosynthesis pathway. The polypeptide is Aspartate carbamoyltransferase catalytic subunit (Chloroflexus aggregans (strain MD-66 / DSM 9485)).